Reading from the N-terminus, the 190-residue chain is Peptidyl-tRNA hydrolase (190 aa).

Position 14 (Phe14) interacts with tRNA. His19 functions as the Proton acceptor in the catalytic mechanism. The tRNA site is built by Met64, Asn66, and Asn112.

This sequence belongs to the PTH family. As to quaternary structure, monomer.

The protein resides in the cytoplasm. It catalyses the reaction an N-acyl-L-alpha-aminoacyl-tRNA + H2O = an N-acyl-L-amino acid + a tRNA + H(+). Its function is as follows. Hydrolyzes ribosome-free peptidyl-tRNAs (with 1 or more amino acids incorporated), which drop off the ribosome during protein synthesis, or as a result of ribosome stalling. Functionally, catalyzes the release of premature peptidyl moieties from peptidyl-tRNA molecules trapped in stalled 50S ribosomal subunits, and thus maintains levels of free tRNAs and 50S ribosomes. The polypeptide is Peptidyl-tRNA hydrolase (Staphylococcus aureus (strain Mu3 / ATCC 700698)).